The chain runs to 462 residues: Exodeoxyribonuclease 7 large subunit (462 aa).

This sequence belongs to the XseA family. Heterooligomer composed of large and small subunits.

It is found in the cytoplasm. It carries out the reaction Exonucleolytic cleavage in either 5'- to 3'- or 3'- to 5'-direction to yield nucleoside 5'-phosphates.. Its function is as follows. Bidirectionally degrades single-stranded DNA into large acid-insoluble oligonucleotides, which are then degraded further into small acid-soluble oligonucleotides. The protein is Exodeoxyribonuclease 7 large subunit of Pectobacterium atrosepticum (strain SCRI 1043 / ATCC BAA-672) (Erwinia carotovora subsp. atroseptica).